The sequence spans 434 residues: MKVIILGGGVIGVTSAWYLVQQGHEVIVVDRQSSAAEETSAGNAGQISPGYATPWGAPGIPLKAVKWMFQKHAPLAIRPDGSLFQLRWMWQMLRNCDASHYAMNKSRMVRIAEYSRDCIRQLRQDTGIEYEGRQGGTLQLFRDQKQFDNAANDIAVLKQEGVAYELLTAEQLKSAEPALEHVSHKLTGGLRLPNDETGDCQIFTKKLAKMAEEAGVTFLFNKEIKHLLFDGDKVTGVQCHDGLLTADHYVVAMGSYSTEFLKNKITIPVYPLKGYSLTMPIIDASRAPTSTILDETYKIAVTRFDNRIRVGGMAEVVGFNLNILKSRCETLKMVVQDLYEGGGDISKATFWTGLRPMTPDGTPIVGPTAYRNLSLNTGHGTLGWTMACGSGQLLADLISGNKTAIAADDLSVFRYIDGFNTKLLRPGQKLDAVY.

Position 3–17 (3–17 (VIILGGGVIGVTSAW)) interacts with FAD.

This sequence belongs to the DadA oxidoreductase family. The cofactor is FAD.

The catalysed reaction is a D-alpha-amino acid + A + H2O = a 2-oxocarboxylate + AH2 + NH4(+). The protein operates within amino-acid degradation; D-alanine degradation; NH(3) and pyruvate from D-alanine: step 1/1. In terms of biological role, oxidative deamination of D-amino acids. The polypeptide is D-amino acid dehydrogenase (Proteus mirabilis (strain HI4320)).